The following is a 241-amino-acid chain: Pyridoxine 5'-phosphate synthase (241 aa).

Asn-7 serves as a coordination point for 3-amino-2-oxopropyl phosphate. 9–10 (DH) contributes to the 1-deoxy-D-xylulose 5-phosphate binding site. Arg-18 serves as a coordination point for 3-amino-2-oxopropyl phosphate. The active-site Proton acceptor is the His-43. 1-deoxy-D-xylulose 5-phosphate contacts are provided by Arg-45 and His-50. Residue Glu-70 is the Proton acceptor of the active site. Thr-100 contacts 1-deoxy-D-xylulose 5-phosphate. His-191 (proton donor) is an active-site residue. 3-amino-2-oxopropyl phosphate-binding positions include Gly-192 and 213-214 (GH).

It belongs to the PNP synthase family. Homooctamer; tetramer of dimers.

It localises to the cytoplasm. It catalyses the reaction 3-amino-2-oxopropyl phosphate + 1-deoxy-D-xylulose 5-phosphate = pyridoxine 5'-phosphate + phosphate + 2 H2O + H(+). It functions in the pathway cofactor biosynthesis; pyridoxine 5'-phosphate biosynthesis; pyridoxine 5'-phosphate from D-erythrose 4-phosphate: step 5/5. Catalyzes the complicated ring closure reaction between the two acyclic compounds 1-deoxy-D-xylulose-5-phosphate (DXP) and 3-amino-2-oxopropyl phosphate (1-amino-acetone-3-phosphate or AAP) to form pyridoxine 5'-phosphate (PNP) and inorganic phosphate. The chain is Pyridoxine 5'-phosphate synthase from Nitratidesulfovibrio vulgaris (strain ATCC 29579 / DSM 644 / CCUG 34227 / NCIMB 8303 / VKM B-1760 / Hildenborough) (Desulfovibrio vulgaris).